Consider the following 754-residue polypeptide: Endothelin-converting enzyme 1 (754 aa).

Over M1 to R52 the chain is Cytoplasmic. T9 is subject to Phosphothreonine. Residues L53 to I73 traverse the membrane as a helical; Signal-anchor for type II membrane protein segment. The Extracellular portion of the chain corresponds to Q74 to W754. The 673-residue stretch at V82–W754 folds into the Peptidase M13 domain. Disulfide bonds link C83-C88, C106-C739, C114-C699, C169-C419, and C628-C751. N-linked (GlcNAc...) asparagine glycosylation is found at N150, N171, N194, N254, N300, N346, N367, and N523. H591 contributes to the Zn(2+) binding site. Residue E592 is part of the active site. H595 provides a ligand contact to Zn(2+). Residues N616 and N635 are each glycosylated (N-linked (GlcNAc...) asparagine). A Zn(2+)-binding site is contributed by E651. D655 functions as the Proton donor in the catalytic mechanism.

It belongs to the peptidase M13 family. In terms of assembly, homodimer; disulfide-linked. Interacts with PPP1R16B. Interacts with TSPAN8; this interaction recruits the endothelin converting enzyme ECE1 to tetraspanin-enriched microdomains and positively modulates its enzymatic activity. Requires Zn(2+) as cofactor.

Its subcellular location is the cell membrane. It catalyses the reaction Hydrolysis of the 21-Trp-|-Val-22 bond in big endothelin to form endothelin 1.. Inhibited by phosphoramidon. Converts big endothelin-1 to endothelin-1. This Bos taurus (Bovine) protein is Endothelin-converting enzyme 1 (ECE1).